The chain runs to 462 residues: Trigger factor (462 aa).

A PPIase FKBP-type domain is found at 163–259; it reads TDYVNIDLQR…VNDVKRRDLP (97 aa). Residues 439–462 are disordered; it reads SREEFEEEMQQQQQQQAQRQRMAP. Residues 448–462 show a composition bias toward low complexity; sequence QQQQQQQAQRQRMAP.

The protein belongs to the FKBP-type PPIase family. Tig subfamily.

The protein resides in the cytoplasm. It catalyses the reaction [protein]-peptidylproline (omega=180) = [protein]-peptidylproline (omega=0). Its function is as follows. Involved in protein export. Acts as a chaperone by maintaining the newly synthesized protein in an open conformation. Functions as a peptidyl-prolyl cis-trans isomerase. The polypeptide is Trigger factor (Salinibacter ruber (strain DSM 13855 / M31)).